The chain runs to 1499 residues: B-cell CLL/lymphoma 9-like protein (1499 aa).

2 disordered regions span residues 1 to 238 and 271 to 500; these read MRIL…PPSQ and VPRA…MGQQ. The span at 20-37 shows a compositional bias: pro residues; sequence GSPPLSPRGHCPPAPAKP. 2 positions are modified to phosphoserine: Ser-21 and Ser-25. Lys-36 is modified (N6-acetyllysine). Composition is skewed to polar residues over residues 45–70 and 85–96; these read TNHG…TCNV and NQISPSNSSLKN. Position 88 is a phosphoserine (Ser-88). 2 positions are modified to N6-acetyllysine: Lys-108 and Lys-110. Basic and acidic residues-rich tracts occupy residues 114 to 126 and 134 to 153; these read DRSV…EQRE and SEAK…ERKQ. 2 positions are modified to phosphoserine: Ser-116 and Ser-118. N6-acetyllysine is present on Lys-137. Residues 193–205 are compositionally biased toward polar residues; the sequence is PGQTTQLPLSESS. Gly residues predominate over residues 222 to 232; that stretch reads PGGGGGGGGVP. Pro residues-rich tracts occupy residues 281–291 and 301–325; these read KVPPTPEPLPL and SQPP…PPEG. A necessary for interaction with CTNNB1 region spans residues 304-533; it reads PPLPPPPPPA…QEEYYEEKRR (230 aa). Low complexity-rich tracts occupy residues 351 to 363 and 370 to 387; these read THPN…TANN and DPSS…AAPG. Residues 399–421 are compositionally biased toward basic and acidic residues; the sequence is LSKEQLEHRERSLQTLRDIERLL. A Phosphoserine modification is found at Ser-424. The segment covering 445–458 has biased composition (pro residues); the sequence is AQAPPPPQQPPTAP. Thr-514 is subject to Phosphothreonine. The residue at position 680 (Arg-680) is an Asymmetric dimethylarginine. 14 positions are modified to phosphoserine: Ser-750, Ser-813, Ser-915, Ser-926, Ser-938, Ser-942, Ser-947, Ser-975, Ser-987, Ser-991, Ser-997, Ser-1004, Ser-1010, and Ser-1017. Disordered stretches follow at residues 888–1084 and 1116–1201; these read SHMP…QNPL and ELLP…PQNS. Positions 935 to 960 are enriched in polar residues; that stretch reads PTLSQVHSPLVTSPSANLKSPQTPSQ. Residues 978–996 show a composition bias toward polar residues; the sequence is VLGSSLSVRSPTGSPSRLK. 2 stretches are compositionally biased toward polar residues: residues 1019–1041 and 1069–1084; these read GVSQ…NMEQ and LPFT…QNPL. 2 stretches are compositionally biased toward pro residues: residues 1122–1132 and 1168–1179; these read PLLPPPPPPQG and HEPPPAMLPSPT. Lys-1344 participates in a covalent cross-link: Glycyl lysine isopeptide (Lys-Gly) (interchain with G-Cter in SUMO2).

Belongs to the BCL9 family. Found in a complex with CDC73; CTNNB1 and PYGO1. Interacts with CTNNB1. Expressed in breast, ductal and invasive ductal carcinomas of the breast, sporadic colorectal adenomas and carcinomas (at protein level). Expressed in fetal brain. Expressed in lung, amygdala, eye, prostate, pancreatic and prostate cancers, head and neck tumors and embryonal tumor.

The protein resides in the nucleus. Functionally, transcriptional regulator that acts as an activator. Promotes beta-catenin transcriptional activity. Plays a role in tumorigenesis. Enhances the neoplastic transforming activity of CTNNB1. The sequence is that of B-cell CLL/lymphoma 9-like protein (BCL9L) from Homo sapiens (Human).